A 359-amino-acid chain; its full sequence is Spore germination protein GerQC (359 aa).

The signal sequence occupies residues 1-16 (MKRWILFLILSVFLIG). A lipid anchor (N-palmitoyl cysteine) is attached at Cys-17. Cys-17 carries the S-diacylglycerol cysteine lipid modification.

The protein belongs to the GerABKC lipoprotein family.

The protein localises to the membrane. Its function is as follows. Required for the germination response to inosine. Has no role in L-alanine germination. The protein is Spore germination protein GerQC (gerQC) of Bacillus cereus.